The primary structure comprises 250 residues: Acetylglutamate kinase (250 aa).

Residues 41–42 (GG), R63, and N156 each bind substrate.

The protein belongs to the acetylglutamate kinase family. ArgB subfamily.

The protein localises to the cytoplasm. It carries out the reaction N-acetyl-L-glutamate + ATP = N-acetyl-L-glutamyl 5-phosphate + ADP. Its pathway is amino-acid biosynthesis; L-arginine biosynthesis; N(2)-acetyl-L-ornithine from L-glutamate: step 2/4. Catalyzes the ATP-dependent phosphorylation of N-acetyl-L-glutamate. This chain is Acetylglutamate kinase, found in Listeria monocytogenes serotype 4b (strain CLIP80459).